Here is a 606-residue protein sequence, read N- to C-terminus: NADH-ubiquinone oxidoreductase chain 5 (606 aa).

The next 15 membrane-spanning stretches (helical) occupy residues 3–23 (VINL…LPII), 38–58 (ITKT…LLFI), 87–107 (FFSL…MEFS), 124–144 (LLLF…LQLF), 180–200 (IGDM…NSWE), 216–236 (LLGL…HPWL), 244–264 (TPVS…FTLI), 276–296 (IQTS…ICAL), 304–323 (IIAL…IGIN), 328–350 (AFIH…GSII), 369–389 (MPIT…MPFL), 404–424 (MSYI…MTAS), 460–480 (LILG…PHTT), 483–503 (MTMP…GFTV), and 586–606 (LMKL…LIAL).

Belongs to the complex I subunit 5 family. As to quaternary structure, core subunit of respiratory chain NADH dehydrogenase (Complex I) which is composed of 45 different subunits.

It is found in the mitochondrion inner membrane. It catalyses the reaction a ubiquinone + NADH + 5 H(+)(in) = a ubiquinol + NAD(+) + 4 H(+)(out). Functionally, core subunit of the mitochondrial membrane respiratory chain NADH dehydrogenase (Complex I) which catalyzes electron transfer from NADH through the respiratory chain, using ubiquinone as an electron acceptor. Essential for the catalytic activity and assembly of complex I. The sequence is that of NADH-ubiquinone oxidoreductase chain 5 (MT-ND5) from Loxodonta africana (African elephant).